The primary structure comprises 403 residues: Phosphoglycerate kinase (403 aa).

Substrate-binding positions include 24 to 26 (DLN), Arg-39, 62 to 65 (HLGR), Arg-121, and Arg-161. Residues Lys-211, Gly-299, Glu-330, and 359–362 (GGDS) each bind ATP.

The protein belongs to the phosphoglycerate kinase family. Monomer.

It is found in the cytoplasm. The catalysed reaction is (2R)-3-phosphoglycerate + ATP = (2R)-3-phospho-glyceroyl phosphate + ADP. The protein operates within carbohydrate degradation; glycolysis; pyruvate from D-glyceraldehyde 3-phosphate: step 2/5. The chain is Phosphoglycerate kinase from Rhodococcus opacus (strain B4).